We begin with the raw amino-acid sequence, 214 residues long: Outer-membrane lipoprotein LolB (214 aa).

An N-terminal signal peptide occupies residues 1-25 (MNNLKRFTKSIFSCIALSGLLFLGG). Residue Cys-26 is the site of N-palmitoyl cysteine attachment. Cys-26 carries the S-diacylglycerol cysteine lipid modification.

This sequence belongs to the LolB family. In terms of assembly, monomer.

It localises to the cell outer membrane. Plays a critical role in the incorporation of lipoproteins in the outer membrane after they are released by the LolA protein. The protein is Outer-membrane lipoprotein LolB of Shewanella oneidensis (strain ATCC 700550 / JCM 31522 / CIP 106686 / LMG 19005 / NCIMB 14063 / MR-1).